A 195-amino-acid chain; its full sequence is Obelin (195 aa).

A propeptide spanning residues 1–6 is cleaved from the precursor; that stretch reads MSSKYA. EF-hand domains lie at 17 to 52, 53 to 88, 110 to 145, and 146 to 181; these read RWIK…DICA, KLEA…FPQF, LIRE…SGIS, and PSQE…FWYT. Ca(2+) is bound by residues Asp30, Asn32, Asn34, Lys36, and Glu41. Residues Asp123, Asp125, Ser127, Thr129, Glu134, Asp159, Asp161, Ser163, Asp165, and Glu170 each contribute to the Ca(2+) site.

Belongs to the aequorin family.

In terms of biological role, ca(2+)-dependent bioluminescence photoprotein. Displays an emission peak at 470 nm (blue light). Trace amounts of calcium ion trigger the intramolecular oxidation of the chromophore, coelenterazine into coelenteramide and CO(2) with the concomitant emission of light. The polypeptide is Obelin (Obelia longissima (Black sea hydrozoan)).